Consider the following 186-residue polypeptide: Large ribosomal subunit protein uL10 (186 aa).

This sequence belongs to the universal ribosomal protein uL10 family. In terms of assembly, part of the ribosomal stalk of the 50S ribosomal subunit. The N-terminus interacts with L11 and the large rRNA to form the base of the stalk. The C-terminus forms an elongated spine to which L12 dimers bind in a sequential fashion forming a multimeric L10(L12)X complex.

Functionally, forms part of the ribosomal stalk, playing a central role in the interaction of the ribosome with GTP-bound translation factors. This Nitrosococcus oceani (strain ATCC 19707 / BCRC 17464 / JCM 30415 / NCIMB 11848 / C-107) protein is Large ribosomal subunit protein uL10.